Here is a 261-residue protein sequence, read N- to C-terminus: Thioredoxin-like protein HCF164, chloroplastic (261 aa).

Residues 1–40 (MARLVFSLNLPSSHGFNLSPRNLQSFFVTQTGAPRFRAVR) constitute a chloroplast transit peptide. A disordered region spans residues 39 to 91 (VRCKPNPESSETKQEKLVIDNGETSSASKEVESSSSVADSSSSSSSGFPESPN). The span at 63 to 84 (SSASKEVESSSSVADSSSSSSS) shows a compositional bias: low complexity. The Thioredoxin domain occupies 101 to 229 (VTVIAALSLF…LVENVNALAA (129 aa)). Catalysis depends on nucleophile residues cysteine 150 and cysteine 153. Cysteine 150 and cysteine 153 are disulfide-bonded.

The protein belongs to the thioredoxin family. As to quaternary structure, interacts in vitro with LTO1.

It is found in the plastid. Its subcellular location is the chloroplast thylakoid membrane. In terms of biological role, thiol-disulfide oxidoreductase that participates in various redox reactions in the chloroplast. Mediates the reduction of PSI-N in the thylakoid lumen. May interact and probably reduce other target proteins of the thylakoid membrane, such as FTSH2, FTSH8, LHCB5, atpA, atpB, atpE, petA and petC. Involved in the biogenesis of the plastid cytochrome b6f complex. Reducing equivalents are provided by stromal M-type thioredoxins and probably transduced through the thylakoid membrane by CCDA. Possesses low insulin disulfide bonds reducing activity. The protein is Thioredoxin-like protein HCF164, chloroplastic of Arabidopsis thaliana (Mouse-ear cress).